The chain runs to 205 residues: Ribosomal RNA small subunit methyltransferase G (205 aa).

S-adenosyl-L-methionine contacts are provided by residues glycine 66, phenylalanine 71, 119–120, and arginine 135; that span reads IE.

Belongs to the methyltransferase superfamily. RNA methyltransferase RsmG family.

Its subcellular location is the cytoplasm. It catalyses the reaction guanosine(527) in 16S rRNA + S-adenosyl-L-methionine = N(7)-methylguanosine(527) in 16S rRNA + S-adenosyl-L-homocysteine. Its function is as follows. Specifically methylates the N7 position of guanine in position 527 of 16S rRNA. The protein is Ribosomal RNA small subunit methyltransferase G of Rhizobium johnstonii (strain DSM 114642 / LMG 32736 / 3841) (Rhizobium leguminosarum bv. viciae).